The chain runs to 566 residues: Proline--tRNA ligase (566 aa).

Belongs to the class-II aminoacyl-tRNA synthetase family. ProS type 1 subfamily. In terms of assembly, homodimer.

Its subcellular location is the cytoplasm. The catalysed reaction is tRNA(Pro) + L-proline + ATP = L-prolyl-tRNA(Pro) + AMP + diphosphate. Functionally, catalyzes the attachment of proline to tRNA(Pro) in a two-step reaction: proline is first activated by ATP to form Pro-AMP and then transferred to the acceptor end of tRNA(Pro). As ProRS can inadvertently accommodate and process non-cognate amino acids such as alanine and cysteine, to avoid such errors it has two additional distinct editing activities against alanine. One activity is designated as 'pretransfer' editing and involves the tRNA(Pro)-independent hydrolysis of activated Ala-AMP. The other activity is designated 'posttransfer' editing and involves deacylation of mischarged Ala-tRNA(Pro). The misacylated Cys-tRNA(Pro) is not edited by ProRS. This chain is Proline--tRNA ligase, found in Bacillus cereus (strain G9842).